Here is a 296-residue protein sequence, read N- to C-terminus: Ribosomal protein L11 methyltransferase (296 aa).

S-adenosyl-L-methionine-binding residues include threonine 139, glycine 163, aspartate 185, and asparagine 232.

The protein belongs to the methyltransferase superfamily. PrmA family.

The protein resides in the cytoplasm. It carries out the reaction L-lysyl-[protein] + 3 S-adenosyl-L-methionine = N(6),N(6),N(6)-trimethyl-L-lysyl-[protein] + 3 S-adenosyl-L-homocysteine + 3 H(+). Functionally, methylates ribosomal protein L11. The chain is Ribosomal protein L11 methyltransferase from Rippkaea orientalis (strain PCC 8801 / RF-1) (Cyanothece sp. (strain PCC 8801)).